The chain runs to 372 residues: Cyclin-J (372 aa).

Positions 15 to 143 (DIHQALRYKE…LLETFQWNLC (129 aa)) constitute a Cyclin N-terminal domain.

The protein belongs to the cyclin family.

The chain is Cyclin-J (CCNJ) from Homo sapiens (Human).